We begin with the raw amino-acid sequence, 670 residues long: Acetyl-coenzyme A synthetase (670 aa).

CoA is bound by residues 205–208 (RRGK) and Thr-326. ATP contacts are provided by residues 402–404 (GEP), 426–431 (STWWMT), Asp-517, Arg-532, and Arg-543. Mg(2+)-binding residues include Val-554, His-556, and Val-559. CoA is bound at residue Arg-601. The residue at position 626 (Lys-626) is an N6-acetyllysine.

It belongs to the ATP-dependent AMP-binding enzyme family. Mg(2+) is required as a cofactor. In terms of processing, acetylated. Deacetylation by the SIR2-homolog deacetylase activates the enzyme.

It carries out the reaction acetate + ATP + CoA = acetyl-CoA + AMP + diphosphate. Its function is as follows. Catalyzes the conversion of acetate into acetyl-CoA (AcCoA), an essential intermediate at the junction of anabolic and catabolic pathways. AcsA undergoes a two-step reaction. In the first half reaction, AcsA combines acetate with ATP to form acetyl-adenylate (AcAMP) intermediate. In the second half reaction, it can then transfer the acetyl group from AcAMP to the sulfhydryl group of CoA, forming the product AcCoA. This is Acetyl-coenzyme A synthetase from Pyrobaculum arsenaticum (strain DSM 13514 / JCM 11321 / PZ6).